Reading from the N-terminus, the 206-residue chain is Small ribosomal subunit protein uS5 (206 aa).

Positions 1–15 (MTDTPTKQEIQSKND) are enriched in polar residues. A disordered region spans residues 1-50 (MTDTPTKQEIQSKNDNVPGATPVEQKKNNRNDRKRNRRGDSKNLERDSDW). Positions 38–50 (RGDSKNLERDSDW) are enriched in basic and acidic residues. The S5 DRBM domain occupies 50 to 113 (WQERVVQIRR…SDGKKNLVRV (64 aa)).

The protein belongs to the universal ribosomal protein uS5 family. As to quaternary structure, part of the 30S ribosomal subunit. Contacts proteins S4 and S8.

Functionally, with S4 and S12 plays an important role in translational accuracy. Located at the back of the 30S subunit body where it stabilizes the conformation of the head with respect to the body. This Prochlorococcus marinus (strain MIT 9301) protein is Small ribosomal subunit protein uS5.